We begin with the raw amino-acid sequence, 590 residues long: Aspartate--tRNA(Asp/Asn) ligase (590 aa).

E175 contributes to the L-aspartate binding site. The tract at residues 199 to 202 (QQYK) is aspartate. L-aspartate is bound by residues R221 and H450. 221-223 (RDE) is a binding site for ATP. Residue E484 coordinates ATP. Residue R491 coordinates L-aspartate. An ATP-binding site is contributed by 536–539 (GVDR).

The protein belongs to the class-II aminoacyl-tRNA synthetase family. Type 1 subfamily. Homodimer.

It localises to the cytoplasm. The catalysed reaction is tRNA(Asx) + L-aspartate + ATP = L-aspartyl-tRNA(Asx) + AMP + diphosphate. In terms of biological role, aspartyl-tRNA synthetase with relaxed tRNA specificity since it is able to aspartylate not only its cognate tRNA(Asp) but also tRNA(Asn). Reaction proceeds in two steps: L-aspartate is first activated by ATP to form Asp-AMP and then transferred to the acceptor end of tRNA(Asp/Asn). The polypeptide is Aspartate--tRNA(Asp/Asn) ligase (Rhodopseudomonas palustris (strain BisB5)).